We begin with the raw amino-acid sequence, 191 residues long: Elongation factor P 1 (191 aa).

Belongs to the elongation factor P family.

The protein localises to the cytoplasm. It functions in the pathway protein biosynthesis; polypeptide chain elongation. In terms of biological role, involved in peptide bond synthesis. Stimulates efficient translation and peptide-bond synthesis on native or reconstituted 70S ribosomes in vitro. Probably functions indirectly by altering the affinity of the ribosome for aminoacyl-tRNA, thus increasing their reactivity as acceptors for peptidyl transferase. The sequence is that of Elongation factor P 1 from Lactobacillus acidophilus (strain ATCC 700396 / NCK56 / N2 / NCFM).